Reading from the N-terminus, the 186-residue chain is Protein GrpE (186 aa).

This sequence belongs to the GrpE family. Homodimer.

Its subcellular location is the cytoplasm. In terms of biological role, participates actively in the response to hyperosmotic and heat shock by preventing the aggregation of stress-denatured proteins, in association with DnaK and GrpE. It is the nucleotide exchange factor for DnaK and may function as a thermosensor. Unfolded proteins bind initially to DnaJ; upon interaction with the DnaJ-bound protein, DnaK hydrolyzes its bound ATP, resulting in the formation of a stable complex. GrpE releases ADP from DnaK; ATP binding to DnaK triggers the release of the substrate protein, thus completing the reaction cycle. Several rounds of ATP-dependent interactions between DnaJ, DnaK and GrpE are required for fully efficient folding. The polypeptide is Protein GrpE (Novosphingobium aromaticivorans (strain ATCC 700278 / DSM 12444 / CCUG 56034 / CIP 105152 / NBRC 16084 / F199)).